We begin with the raw amino-acid sequence, 461 residues long: Cysteine--tRNA ligase (461 aa).

Position 30 (Cys-30) interacts with Zn(2+). Residues 32–42 (VTVYDLCHIGH) carry the 'HIGH' region motif. Zn(2+) contacts are provided by Cys-211, His-236, and Glu-240. The short motif at 268–272 (KMSKS) is the 'KMSKS' region element. An ATP-binding site is contributed by Lys-271.

It belongs to the class-I aminoacyl-tRNA synthetase family. As to quaternary structure, monomer. Zn(2+) serves as cofactor.

The protein localises to the cytoplasm. The enzyme catalyses tRNA(Cys) + L-cysteine + ATP = L-cysteinyl-tRNA(Cys) + AMP + diphosphate. The sequence is that of Cysteine--tRNA ligase from Shewanella sp. (strain MR-4).